Here is a 20-residue protein sequence, read N- to C-terminus: Acidic phospholipase A2 CbIbeta (20 aa).

Belongs to the phospholipase A2 family. Group II subfamily. D49 sub-subfamily. In terms of assembly, heterodimer of an acidic subunit (CbIalpha or CbIbeta) and a basic subunit (CbII). The acidic subunit (CbI) is non-toxic, and increases the toxicity of the basic subunit (CbII). Ca(2+) is required as a cofactor. In terms of processing, contains 7 disulfide bonds. In terms of tissue distribution, expressed by the venom gland.

It is found in the secreted. The catalysed reaction is a 1,2-diacyl-sn-glycero-3-phosphocholine + H2O = a 1-acyl-sn-glycero-3-phosphocholine + a fatty acid + H(+). Heterodimer: presynaptic neurotoxin. Its function is as follows. Monomer: Snake venom phospholipase A2 (PLA2) is inactive towards micellar phosphatidylcholine but is weakly active towards non-micellar dithiolecithin. PLA2 catalyzes the calcium-dependent hydrolysis of the 2-acyl groups in 3-sn-phosphoglycerides. The protein is Acidic phospholipase A2 CbIbeta of Pseudocerastes fieldi (Field's horned viper).